A 347-amino-acid chain; its full sequence is Protein pelota homolog (347 aa).

Belongs to the eukaryotic release factor 1 family. Pelota subfamily. As to quaternary structure, monomer. The cofactor is a divalent metal cation.

Its subcellular location is the cytoplasm. In terms of biological role, may function in recognizing stalled ribosomes, interact with stem-loop structures in stalled mRNA molecules, and effect endonucleolytic cleavage of the mRNA. May play a role in the release non-functional ribosomes and degradation of damaged mRNAs. Has endoribonuclease activity. The sequence is that of Protein pelota homolog from Methanocaldococcus jannaschii (strain ATCC 43067 / DSM 2661 / JAL-1 / JCM 10045 / NBRC 100440) (Methanococcus jannaschii).